The sequence spans 201 residues: Peptide deformylase (201 aa).

Positions 92 and 134 each coordinate Fe cation. Glutamate 135 is a catalytic residue. Histidine 138 contacts Fe cation.

This sequence belongs to the polypeptide deformylase family. Fe(2+) is required as a cofactor.

The enzyme catalyses N-terminal N-formyl-L-methionyl-[peptide] + H2O = N-terminal L-methionyl-[peptide] + formate. In terms of biological role, removes the formyl group from the N-terminal Met of newly synthesized proteins. Requires at least a dipeptide for an efficient rate of reaction. N-terminal L-methionine is a prerequisite for activity but the enzyme has broad specificity at other positions. This chain is Peptide deformylase, found in Rhodopirellula baltica (strain DSM 10527 / NCIMB 13988 / SH1).